The chain runs to 112 residues: Nitrogenase-stabilizing/protective protein NifW (112 aa).

The protein belongs to the NifW family. As to quaternary structure, homotrimer; associates with NifD.

Functionally, may protect the nitrogenase Fe-Mo protein from oxidative damage. This Rhodopseudomonas palustris (strain BisA53) protein is Nitrogenase-stabilizing/protective protein NifW.